The chain runs to 541 residues: 1'-carboxy-chondrochloren decarboxylase (541 aa).

One can recognise an FAD-binding PCMH-type domain in the interval Thr39–Arg226.

It carries out the reaction 1'-carboxy-chondrochloren A + FAD + 2 H(+) = chondrochloren A + FADH2 + CO2. The catalysed reaction is 1'-carboxy-chondrochloren B + FAD + 2 H(+) = chondrochloren B + FADH2 + CO2. Its pathway is antibiotic biosynthesis. Its activity is regulated as follows. Activity is not affected by the addition of EDTA or/and EGTA chelators or in the presence of external metals like Zn(2+), Mg(2+), Mn(2+) and Fe(2+). Activity is inhibited under low oxygen conditions. Functionally, oxidative decarboxylase involved in the biosynthesis of the antibiotics chondrochloren A and chondrochloren B. Catalyzes the decarboxylation of biologically inactive pre-chondrochloren A and pre-chondrochloren B to yield mature chondrochloren A and chondrochloren B, respectively. Cannot decarboxylate free L-tyrosine, 3-chloro-tyrosine or a number of chlorinated and non-chlorinated analog substrates containing variable N-acyl chains. The chain is 1'-carboxy-chondrochloren decarboxylase from Chondromyces crocatus.